We begin with the raw amino-acid sequence, 152 residues long: Aspartate carbamoyltransferase regulatory chain (152 aa).

Zn(2+) is bound by residues cysteine 108, cysteine 113, cysteine 137, and cysteine 140.

The protein belongs to the PyrI family. In terms of assembly, contains catalytic and regulatory chains. It depends on Zn(2+) as a cofactor.

Functionally, involved in allosteric regulation of aspartate carbamoyltransferase. The chain is Aspartate carbamoyltransferase regulatory chain from Neisseria gonorrhoeae (strain ATCC 700825 / FA 1090).